Reading from the N-terminus, the 213-residue chain is Large ribosomal subunit protein uL23 (213 aa).

The segment at 1–117 (MNHNEIIKYP…KSTSELKLEE (117 aa)) is large ribosomal subunit protein uL23. The tract at residues 118–213 (KIAAKIAAKE…TTKKTTTKKV (96 aa)) is unknown.

This sequence belongs to the universal ribosomal protein uL23 family. In terms of assembly, part of the 50S ribosomal subunit. Contacts protein L29, and trigger factor when it is bound to the ribosome.

In terms of biological role, one of the early assembly proteins it binds 23S rRNA. One of the proteins that surrounds the polypeptide exit tunnel on the outside of the ribosome. Forms the main docking site for trigger factor binding to the ribosome. This chain is Large ribosomal subunit protein uL23, found in Mycoplasma mobile (strain ATCC 43663 / 163K / NCTC 11711) (Mesomycoplasma mobile).